A 418-amino-acid chain; its full sequence is Histidine--tRNA ligase (418 aa).

The protein belongs to the class-II aminoacyl-tRNA synthetase family.

The protein localises to the cytoplasm. The enzyme catalyses tRNA(His) + L-histidine + ATP = L-histidyl-tRNA(His) + AMP + diphosphate + H(+). This Methanococcus maripaludis (strain C7 / ATCC BAA-1331) protein is Histidine--tRNA ligase.